We begin with the raw amino-acid sequence, 792 residues long: Phosphoenolpyruvate synthase (792 aa).

Residue His421 is the Tele-phosphohistidine intermediate of the active site. Residues Arg511, Arg578, Glu680, Gly701, Ser702, Asn703, and Asp704 each contribute to the substrate site. Position 680 (Glu680) interacts with Mg(2+). Asp704 contacts Mg(2+). Cys751 acts as the Proton donor in catalysis.

It belongs to the PEP-utilizing enzyme family. In terms of assembly, homodimer. Mg(2+) serves as cofactor.

The catalysed reaction is pyruvate + ATP + H2O = phosphoenolpyruvate + AMP + phosphate + 2 H(+). Its pathway is carbohydrate biosynthesis; gluconeogenesis. Activated by a Pi-dependent pyrophosphorylation and inactivated by an ADP-dependent phosphorylation on a regulatory threonine. Both reactions are mediated by the bifunctional serine/threonine kinase and phosphorylase PpsR. Catalyzes the phosphorylation of pyruvate to phosphoenolpyruvate. This is Phosphoenolpyruvate synthase (ppsA) from Escherichia coli (strain K12).